Reading from the N-terminus, the 1067-residue chain is Kinesin-like protein KIF11-A (1067 aa).

One can recognise a Kinesin motor domain in the interval 18 to 359; it reads NIQVVVRCRP…LDYASRAKNI (342 aa). 105–112 is an ATP binding site; sequence GQTGTGKT. Coiled-coil stretches lie at residues 365 to 480, 692 to 721, and 882 to 915; these read VNQK…QEAF, DSSS…HSEG, and QAQE…QVQS. The residue at position 937 (Thr-937) is a Phosphothreonine; by CDK1. Ser-1046 carries the post-translational modification Phosphoserine; by NEK6.

This sequence belongs to the TRAFAC class myosin-kinesin ATPase superfamily. Kinesin family. BimC subfamily. In terms of assembly, heterotetramer of two heavy and two light chains. Interacts with aurka. Phosphorylation of Thr-937 during mitosis controls the association of this protein with the spindle apparatus. Post-translationally, a subset of this protein primarily localized at the spindle pole is phosphorylated by NEK6 during mitosis. In terms of processing, phosphorylated on a serine residue by aurka. In terms of tissue distribution, highly expressed in unfertilized eggs, especially in the germinal vesicle and in the radial yolk-poor channels. Also present in testis.

The protein resides in the cytoplasm. Its subcellular location is the cytoskeleton. It localises to the spindle pole. In terms of biological role, plus end-directed motor protein required for establishing a bipolar spindle. Associates with both interphase and spindle microtubules. May be involved in nuclear divisions taking place during the development of unfertilized eggs. Required in non-mitotic cells for transport of secretory proteins from the Golgi complex to the cell surface. The sequence is that of Kinesin-like protein KIF11-A (kif11-a) from Xenopus laevis (African clawed frog).